Reading from the N-terminus, the 514-residue chain is Inosine-5'-monophosphate dehydrogenase (514 aa).

CBS domains lie at 112 to 171 (FISK…DTPV) and 175 to 233 (MTRR…PHST). NAD(+) contacts are provided by residues 270–272 (DSS) and 320–322 (GMG). K(+)-binding residues include G322 and G324. IMP is bound at residue S325. C327 is a binding site for K(+). The active-site Thioimidate intermediate is the C327. IMP-binding positions include 360-362 (DGG), 383-384 (GG), and 407-411 (YRGMG). Catalysis depends on R425, which acts as the Proton acceptor. Q437 provides a ligand contact to IMP. K(+) is bound by residues E496, G497, and G498. A Microbody targeting signal motif is present at residues 512 to 514 (AKM).

The protein belongs to the IMPDH/GMPR family. As to quaternary structure, heterotetramer. Interacts with glycosomal protein sorting receptor PEX5. It depends on K(+) as a cofactor.

Its subcellular location is the glycosome. It carries out the reaction IMP + NAD(+) + H2O = XMP + NADH + H(+). The protein operates within purine metabolism; XMP biosynthesis via de novo pathway; XMP from IMP: step 1/1. Mycophenolic acid (MPA) is a non-competitive inhibitor that prevents formation of the closed enzyme conformation by binding to the same site as the amobile flap. In contrast, mizoribine monophosphate (MZP) is a competitive inhibitor that induces the closed conformation. MPA is a potent inhibitor of mammalian IMPDHs but a poor inhibitor of the bacterial enzymes. MZP is a more potent inhibitor of bacterial IMPDH. Potently inhibited by MPA. Inhibited by XMP and GMP. Functionally, catalyzes the conversion of inosine 5'-phosphate (IMP) to xanthosine 5'-phosphate (XMP), the first committed and rate-limiting step in the de novo synthesis of guanine nucleotides, and therefore plays an important role in the regulation of cell growth. The polypeptide is Inosine-5'-monophosphate dehydrogenase (Leishmania donovani).